The sequence spans 150 residues: Large ribosomal subunit protein bL9 (150 aa).

Belongs to the bacterial ribosomal protein bL9 family.

In terms of biological role, binds to the 23S rRNA. This is Large ribosomal subunit protein bL9 from Vibrio atlanticus (strain LGP32) (Vibrio splendidus (strain Mel32)).